The primary structure comprises 129 residues: NADH-quinone oxidoreductase subunit A (129 aa).

The next 3 helical transmembrane spans lie at 6-26 (FWPFILYAGMVLVLVALIVGF), 63-83 (LVAVLFVIFDMEAAFIFAWAV), and 89-109 (GWIGYGGALAFITILGVALIY).

Belongs to the complex I subunit 3 family. As to quaternary structure, NDH-1 is composed of 14 different subunits. Subunits NuoA, H, J, K, L, M, N constitute the membrane sector of the complex.

The protein localises to the cell inner membrane. It carries out the reaction a quinone + NADH + 5 H(+)(in) = a quinol + NAD(+) + 4 H(+)(out). In terms of biological role, NDH-1 shuttles electrons from NADH, via FMN and iron-sulfur (Fe-S) centers, to quinones in the respiratory chain. The immediate electron acceptor for the enzyme in this species is believed to be ubiquinone. Couples the redox reaction to proton translocation (for every two electrons transferred, four hydrogen ions are translocated across the cytoplasmic membrane), and thus conserves the redox energy in a proton gradient. This is NADH-quinone oxidoreductase subunit A from Nitrosococcus oceani (strain ATCC 19707 / BCRC 17464 / JCM 30415 / NCIMB 11848 / C-107).